The following is a 473-amino-acid chain: MQYLPIFTKLDNKPVLVVGGGDVALRKCSALLKARASITLVAPKFCQQLIELASENKVTLIHEYFSEQHLKNMMLVIAATDLEHVNSQVFELANAHNIFVNVVDDQPKCTFIFPSIVDRNPITIAISSAGTAPVLARRLREKLETLIPQHIGPLATLVGGFRSKVKQRFKHFADRRQFWEGVFDSSVVSKVQTGDTQAAEQQLEHMLNAKAEPEGEVYVVGAGPGDPELLTLKALQLMQQADVVVYDYLVSDEIMELVRRDADLICVGKRLGDHSVAQQDTNQMLVDLAKQGKKVCRIKGGDPFIYGRGGEEVQVLAANKVNYQIVPGITAAAGCSAYAGIPLTHRDHAQAIQFVTGHCKKDGQELDWQSLAKPNQTLAIYMGVIKSPHIQAELLKHGRNANTPVAIIENGTRKNQRVITGKLGELADLITRNSVVSPALLIIGEVASLHQELHWFGAKAQTSSFAQPLTDVA.

Positions 1–203 are precorrin-2 dehydrogenase /sirohydrochlorin ferrochelatase; sequence MQYLPIFTKL…GDTQAAEQQL (203 aa). Residues 22–23 and 43–44 each bind NAD(+); these read DV and PK. The residue at position 128 (serine 128) is a Phosphoserine. Residues 215-473 are uroporphyrinogen-III C-methyltransferase; that stretch reads GEVYVVGAGP…SFAQPLTDVA (259 aa). Position 224 (proline 224) interacts with S-adenosyl-L-methionine. Aspartate 247 acts as the Proton acceptor in catalysis. The Proton donor role is filled by lysine 269. S-adenosyl-L-methionine-binding positions include 300–302, isoleucine 305, 330–331, methionine 382, and glycine 411; these read GGD and TA.

This sequence in the N-terminal section; belongs to the precorrin-2 dehydrogenase / sirohydrochlorin ferrochelatase family. It in the C-terminal section; belongs to the precorrin methyltransferase family.

It catalyses the reaction uroporphyrinogen III + 2 S-adenosyl-L-methionine = precorrin-2 + 2 S-adenosyl-L-homocysteine + H(+). The catalysed reaction is precorrin-2 + NAD(+) = sirohydrochlorin + NADH + 2 H(+). It carries out the reaction siroheme + 2 H(+) = sirohydrochlorin + Fe(2+). It functions in the pathway cofactor biosynthesis; adenosylcobalamin biosynthesis; precorrin-2 from uroporphyrinogen III: step 1/1. It participates in cofactor biosynthesis; adenosylcobalamin biosynthesis; sirohydrochlorin from precorrin-2: step 1/1. The protein operates within porphyrin-containing compound metabolism; siroheme biosynthesis; precorrin-2 from uroporphyrinogen III: step 1/1. Its pathway is porphyrin-containing compound metabolism; siroheme biosynthesis; siroheme from sirohydrochlorin: step 1/1. It functions in the pathway porphyrin-containing compound metabolism; siroheme biosynthesis; sirohydrochlorin from precorrin-2: step 1/1. In terms of biological role, multifunctional enzyme that catalyzes the SAM-dependent methylations of uroporphyrinogen III at position C-2 and C-7 to form precorrin-2 via precorrin-1. Then it catalyzes the NAD-dependent ring dehydrogenation of precorrin-2 to yield sirohydrochlorin. Finally, it catalyzes the ferrochelation of sirohydrochlorin to yield siroheme. The chain is Siroheme synthase from Pseudoalteromonas translucida (strain TAC 125).